A 1331-amino-acid polypeptide reads, in one-letter code: X-linked retinitis pigmentosa GTPase regulator-interacting protein 1 (1331 aa).

3 disordered regions span residues 1–165 (MQHL…PPAF), 183–220 (SQLT…SEEC), and 351–374 (HQPL…LPPQ). The span at 41-67 (NQKELNCRRLHLHEEPTLVKEPSPKQR) shows a compositional bias: basic and acidic residues. Composition is skewed to polar residues over residues 77–86 (VQRSTTTQPD) and 183–193 (SQLTHTMTTDS). The segment covering 194–220 (THVEEIPRSPEKTSKVEKPEQRSSEEC) has biased composition (basic and acidic residues). Coiled coils occupy residues 236 to 352 (ELIR…SSHQ) and 498 to 546 (MCYQ…LRSH). The segment covering 351–367 (HQPLDSSHQPHWSTELT) has biased composition (polar residues). Positions 745 to 870 (GARKVQSNES…AQNKSIKGDF (126 aa)) constitute a C2 domain. 2 disordered regions span residues 899-1057 (FQMS…VQDK) and 1088-1146 (AEDG…SDDI). Residues 908-999 (EGEEKEEEGG…DVLEASFTEE (92 aa)) are a coiled coil. Acidic residues predominate over residues 910–988 (EEKEEEGGEE…EEEEEEEDEN (79 aa)). Composition is skewed to basic and acidic residues over residues 1022–1039 (PEKR…REHQ) and 1088–1115 (AEDG…EHPS). The span at 1129-1141 (CEQASEVSETQTT) shows a compositional bias: polar residues. Residues 1136–1326 (SETQTTDSDD…ALHGIYKEMT (191 aa)) form an interaction with RPGR region.

The protein belongs to the RPGRIP1 family. In terms of assembly, interacts with NPHP4. Interacts with NEK4. Forms homodimers and elongated homopolymers. Interacts with RPGR. Interacts with SPATA7. Interacts with CEP290/NPHP6; mediating the association between RPGR and CEP290/NPHP6. As to expression, expressed in the retina (at protein level).

It is found in the cell projection. The protein resides in the cilium. Functionally, may function as scaffolding protein. Required for normal location of RPGR at the connecting cilium of photoreceptor cells. Required for normal disk morphogenesis and disk organization in the outer segment of photoreceptor cells and for survival of photoreceptor cells. This is X-linked retinitis pigmentosa GTPase regulator-interacting protein 1 (Rpgrip1) from Mus musculus (Mouse).